The following is a 395-amino-acid chain: Protein phosphatase methylesterase 1 (395 aa).

Active-site residues include serine 194, aspartate 222, and histidine 348.

This sequence belongs to the AB hydrolase superfamily.

The catalysed reaction is [phosphatase 2A protein]-C-terminal L-leucine methyl ester + H2O = [phosphatase 2A protein]-C-terminal L-leucine + methanol + H(+). In terms of biological role, demethylates proteins that have been reversibly carboxymethylated. Demethylates the phosphatase PP2A catalytic subunit. This chain is Protein phosphatase methylesterase 1 (PPE1), found in Kluyveromyces lactis (strain ATCC 8585 / CBS 2359 / DSM 70799 / NBRC 1267 / NRRL Y-1140 / WM37) (Yeast).